Here is a 160-residue protein sequence, read N- to C-terminus: Cytochrome b6-f complex subunit 4 (160 aa).

3 helical membrane passes run 36–56 (LLYI…GLAV), 95–115 (LLGV…PFLE), and 131–151 (TVFL…TLPI).

Belongs to the cytochrome b family. PetD subfamily. The 4 large subunits of the cytochrome b6-f complex are cytochrome b6, subunit IV (17 kDa polypeptide, petD), cytochrome f and the Rieske protein, while the 4 small subunits are petG, petL, petM and petN. The complex functions as a dimer.

It is found in the plastid. The protein localises to the chloroplast thylakoid membrane. Functionally, component of the cytochrome b6-f complex, which mediates electron transfer between photosystem II (PSII) and photosystem I (PSI), cyclic electron flow around PSI, and state transitions. The sequence is that of Cytochrome b6-f complex subunit 4 from Gossypium barbadense (Sea Island cotton).